Here is a 210-residue protein sequence, read N- to C-terminus: Prolactin (210 aa).

Positions 1-23 (MARRSQGTKLHLAVLCLVVSCHA) are cleaved as a signal peptide. Cystine bridges form between Cys-69–Cys-183 and Cys-200–Cys-210.

Belongs to the somatotropin/prolactin family.

The protein localises to the secreted. In Oncorhynchus mykiss (Rainbow trout), this protein is Prolactin (prl).